A 182-amino-acid chain; its full sequence is Large ribosomal subunit protein uL5 (182 aa).

This sequence belongs to the universal ribosomal protein uL5 family. Part of the 50S ribosomal subunit; part of the 5S rRNA/L5/L18/L25 subcomplex. Contacts the 5S rRNA and the P site tRNA. Forms a bridge to the 30S subunit in the 70S ribosome.

Functionally, this is one of the proteins that bind and probably mediate the attachment of the 5S RNA into the large ribosomal subunit, where it forms part of the central protuberance. In the 70S ribosome it contacts protein S13 of the 30S subunit (bridge B1b), connecting the 2 subunits; this bridge is implicated in subunit movement. Contacts the P site tRNA; the 5S rRNA and some of its associated proteins might help stabilize positioning of ribosome-bound tRNAs. The protein is Large ribosomal subunit protein uL5 of Thermus aquaticus.